We begin with the raw amino-acid sequence, 218 residues long: Elongation factor Ts (218 aa).

The interval 82–85 is involved in Mg(2+) ion dislocation from EF-Tu; it reads TDFV.

It belongs to the EF-Ts family.

It localises to the cytoplasm. Functionally, associates with the EF-Tu.GDP complex and induces the exchange of GDP to GTP. It remains bound to the aminoacyl-tRNA.EF-Tu.GTP complex up to the GTP hydrolysis stage on the ribosome. The polypeptide is Elongation factor Ts (Prochlorococcus marinus (strain AS9601)).